The following is a 634-amino-acid chain: DNA-directed RNA polymerase subunit gamma (634 aa).

4 residues coordinate Zn(2+): Cys74, Cys76, Cys89, and Cys92. Residues Asp471, Asp473, and Asp475 each contribute to the Mg(2+) site.

Belongs to the RNA polymerase beta' chain family. RpoC1 subfamily. As to quaternary structure, in cyanobacteria the RNAP catalytic core is composed of 2 alpha, 1 beta, 1 beta', 1 gamma and 1 omega subunit. When a sigma factor is associated with the core the holoenzyme is formed, which can initiate transcription. The cofactor is Mg(2+). It depends on Zn(2+) as a cofactor.

The enzyme catalyses RNA(n) + a ribonucleoside 5'-triphosphate = RNA(n+1) + diphosphate. In terms of biological role, DNA-dependent RNA polymerase catalyzes the transcription of DNA into RNA using the four ribonucleoside triphosphates as substrates. In Prochlorococcus marinus (strain MIT 9303), this protein is DNA-directed RNA polymerase subunit gamma.